The primary structure comprises 111 residues: Nucleoid-associated protein Teth39_2199 (111 aa).

The protein belongs to the YbaB/EbfC family. Homodimer.

Its subcellular location is the cytoplasm. It localises to the nucleoid. Its function is as follows. Binds to DNA and alters its conformation. May be involved in regulation of gene expression, nucleoid organization and DNA protection. The protein is Nucleoid-associated protein Teth39_2199 of Thermoanaerobacter pseudethanolicus (strain ATCC 33223 / 39E) (Clostridium thermohydrosulfuricum).